We begin with the raw amino-acid sequence, 513 residues long: ATP synthase subunit alpha (513 aa).

Residue 169–176 (GDRQTGKT) coordinates ATP.

The protein belongs to the ATPase alpha/beta chains family. In terms of assembly, F-type ATPases have 2 components, CF(1) - the catalytic core - and CF(0) - the membrane proton channel. CF(1) has five subunits: alpha(3), beta(3), gamma(1), delta(1), epsilon(1). CF(0) has three main subunits: a(1), b(2) and c(9-12). The alpha and beta chains form an alternating ring which encloses part of the gamma chain. CF(1) is attached to CF(0) by a central stalk formed by the gamma and epsilon chains, while a peripheral stalk is formed by the delta and b chains.

It is found in the cell inner membrane. It catalyses the reaction ATP + H2O + 4 H(+)(in) = ADP + phosphate + 5 H(+)(out). Functionally, produces ATP from ADP in the presence of a proton gradient across the membrane. The alpha chain is a regulatory subunit. The sequence is that of ATP synthase subunit alpha from Haemophilus influenzae (strain ATCC 51907 / DSM 11121 / KW20 / Rd).